A 703-amino-acid polypeptide reads, in one-letter code: Leucine zipper putative tumor suppressor 3 (703 aa).

3 disordered regions span residues 1-22 (MAPA…PHLF), 40-190 (RADP…SEPL), and 204-347 (FHSM…PPSP). The segment covering 96–107 (GSFPGPRSSGSG) has biased composition (low complexity). Basic and acidic residues predominate over residues 109–124 (NRERPGPGRYPSEDKV). Residues 205-218 (HSMQNLCPPQTNGT) are compositionally biased toward polar residues. Positions 251-268 (DSGRNSLTSLPTYSSSYS) are enriched in low complexity. The span at 290–299 (SSGGGGGGSG) shows a compositional bias: gly residues. Low complexity predominate over residues 304–324 (GTSDSGRASSKSGSSSSMGRS). Positions 325 to 336 (GHLGSGEGGNGG) are enriched in gly residues. Serine 346 and serine 348 each carry phosphoserine. Coiled coils occupy residues 348-526 (SALI…SLRD) and 600-669 (TRAL…RLRE). The tract at residues 665–703 (RRLRERGAAGGSRTPTPQHGEEEKAWTPSRLERIESTEI) is disordered. Residues 683–703 (HGEEEKAWTPSRLERIESTEI) are compositionally biased toward basic and acidic residues.

The protein belongs to the LZTS3 family. Interacts (via C-terminus) with SHANK3 (via PDZ domain). Interacts (via coiled coil) with SIPA1L1. Can form homooligomers. As to expression, detected in brain, with highest expression in brain cortex, caudate putamen, cerebellum and hippocampus. Detected in neuropil (at protein level). Detected in brain and kidney.

The protein localises to the synapse. Its subcellular location is the postsynaptic density. It localises to the cell projection. It is found in the dendritic spine. The protein resides in the dendrite. The protein localises to the cytoplasm. Its subcellular location is the cytoskeleton. In terms of biological role, may be involved in promoting the maturation of dendritic spines, probably via regulating SIPA1L1 levels at the postsynaptic density of synapses. This is Leucine zipper putative tumor suppressor 3 from Rattus norvegicus (Rat).